We begin with the raw amino-acid sequence, 237 residues long: Bax inhibitor 1 (237 aa).

Topologically, residues 1–29 (MNIFDRKINFDALLKFSHITPSTQQHLKK) are cytoplasmic. A Glycyl lysine isopeptide (Lys-Gly) (interchain with G-Cter in ubiquitin) cross-link involves residue lysine 7. Residues 30–50 (VYASFALCMFVAAAGAYVHVV) form a helical membrane-spanning segment. Topologically, residues 51–52 (TH) are lumenal. A helical transmembrane segment spans residues 53–73 (FIQAGLLSALGSLALMIWLMA). The Cytoplasmic portion of the chain corresponds to 74 to 86 (TPHSHETEQKRLG). The chain crosses the membrane as a helical span at residues 87–107 (LLAGFAFLTGVGLGPALELCI). Residues 108-112 (AVNPS) lie on the Lumenal side of the membrane. A helical transmembrane segment spans residues 113–133 (ILPTAFMGTAMIFTCFSLSAL). Residues 134-139 (YARRRS) lie on the Cytoplasmic side of the membrane. Residues 140-160 (YLFLGGILMSAMSLMLLSSLG) form a helical membrane-spanning segment. Over 161-166 (NLFFGS) the chain is Lumenal. A helical membrane pass occupies residues 167–187 (IWLFQANLYLGLLVMCGFVLF). Over 188–206 (DTQLIIEKAEHGDKDYIWH) the chain is Cytoplasmic. Positions 207–227 (CVDLFLDFVTLFRKLMLILAF) form an intramembrane region, helical. Over 228–237 (NEKDKKKEKK) the chain is Cytoplasmic.

The protein belongs to the BI1 family. Interacts with BCL2. Interacts with BCL2L1. Interacts with ERN1. In terms of processing, ubiquitinated by BFAR, leading to proteasomal degradation. In terms of tissue distribution, highly abundant in adult testis.

The protein resides in the endoplasmic reticulum membrane. In terms of biological role, endoplasmic reticulum (ER)-resident protein that confers cellular protection as an anti-apoptotic protein by limiting multiple stress-inducing pathways surrounding the endoplasmic reticulum and mitochondria. Inhibits the activities of the key sensor for the endoplasmic reticulum unfolded protein response IRE1alpha/ERN1 both directly and by blocking BAX/BAK binding. Modulates ER calcium homeostasis by acting as a calcium-leak channel. Negatively regulates autophagy and autophagosome formation, especially during periods of nutrient deprivation, and reduces cell survival during starvation. This is Bax inhibitor 1 (Tmbim6) from Mus musculus (Mouse).